The chain runs to 245 residues: 1-(5-phosphoribosyl)-5-[(5-phosphoribosylamino)methylideneamino] imidazole-4-carboxamide isomerase (245 aa).

Catalysis depends on aspartate 11, which acts as the Proton acceptor. Catalysis depends on aspartate 132, which acts as the Proton donor.

Belongs to the HisA/HisF family.

It is found in the cytoplasm. It carries out the reaction 1-(5-phospho-beta-D-ribosyl)-5-[(5-phospho-beta-D-ribosylamino)methylideneamino]imidazole-4-carboxamide = 5-[(5-phospho-1-deoxy-D-ribulos-1-ylimino)methylamino]-1-(5-phospho-beta-D-ribosyl)imidazole-4-carboxamide. Its pathway is amino-acid biosynthesis; L-histidine biosynthesis; L-histidine from 5-phospho-alpha-D-ribose 1-diphosphate: step 4/9. In Geobacillus kaustophilus (strain HTA426), this protein is 1-(5-phosphoribosyl)-5-[(5-phosphoribosylamino)methylideneamino] imidazole-4-carboxamide isomerase.